The chain runs to 379 residues: Alkanesulfonate monooxygenase (379 aa).

This sequence belongs to the SsuD family.

The catalysed reaction is an alkanesulfonate + FMNH2 + O2 = an aldehyde + FMN + sulfite + H2O + 2 H(+). Catalyzes the desulfonation of aliphatic sulfonates. This chain is Alkanesulfonate monooxygenase, found in Pseudomonas syringae pv. tomato (strain ATCC BAA-871 / DC3000).